We begin with the raw amino-acid sequence, 838 residues long: Ras-interacting protein RIP3 (838 aa).

Disordered stretches follow at residues 66 to 97 (VSTS…QQQA), 157 to 290 (KPTT…TSPK), and 305 to 336 (NSKT…QQQA). 3 stretches are compositionally biased toward low complexity: residues 67 to 97 (STSN…QQQA), 157 to 241 (KPTT…QQKP), and 248 to 284 (PQNI…QQQQ). Positions 310 to 321 (QKSDKTSEKENK) are enriched in basic and acidic residues. Positions 441 to 515 (QLKVRVIEKA…KDEVLVLCPN (75 aa)) constitute a CRIM domain. Disordered regions lie at residues 522 to 581 (KSSS…QQTQ) and 594 to 646 (QQQQ…GPDA). 3 stretches are compositionally biased toward low complexity: residues 537–556 (NNNN…SNNN), 563–581 (QPQQ…QQTQ), and 594–620 (QQQQ…QPDQ). Residues 621–631 (VGGGGGGGGGN) show a composition bias toward gly residues. An RBD domain is found at 648–717 (LVVKITLPDS…GGADLILVSR (70 aa)).

This sequence belongs to the SIN1 family. In terms of assembly, interacts with activated RasG. Part of a complex, TORC2, consisting of tor, lst8, piaA and ripA. Additional proteins, such as 14-3-3 and heat-shock proteins, may also belong to the TORC2 complex.

Component of a Ras-regulated pathway involved in integrating chemotaxis and signal relay pathways that are essential for aggregation. This chain is Ras-interacting protein RIP3 (ripA), found in Dictyostelium discoideum (Social amoeba).